The sequence spans 581 residues: Putative adenine deaminase BH0637 (581 aa).

It belongs to the metallo-dependent hydrolases superfamily. Adenine deaminase family.

It carries out the reaction adenine + H2O + H(+) = hypoxanthine + NH4(+). The polypeptide is Putative adenine deaminase BH0637 (Halalkalibacterium halodurans (strain ATCC BAA-125 / DSM 18197 / FERM 7344 / JCM 9153 / C-125) (Bacillus halodurans)).